Reading from the N-terminus, the 659-residue chain is Alpha-galactosidase D (659 aa).

A signal peptide spans 1 to 20; sequence MRALVPMVVAATALASPAPA. N-linked (GlcNAc...) asparagine glycosylation is found at N48, N86, and N130. C125 and C158 are oxidised to a cystine. The active-site Nucleophile is D156. The N-linked (GlcNAc...) asparagine glycan is linked to N183. Residue 201 to 205 participates in substrate binding; it reads EWGID. The active-site Proton donor is D223. N438, N450, N484, N551, and N583 each carry an N-linked (GlcNAc...) asparagine glycan.

Belongs to the glycosyl hydrolase 27 family.

It is found in the secreted. The catalysed reaction is Hydrolysis of terminal, non-reducing alpha-D-galactose residues in alpha-D-galactosides, including galactose oligosaccharides, galactomannans and galactolipids.. In terms of biological role, hydrolyzes a variety of simple alpha-D-galactoside as well as more complex molecules such as oligosaccharides and polysaccharides. Active on paranitrophenyl-alpha-galactoside but not on raffinose, locust bean gum and gum guar. In Emericella nidulans (strain FGSC A4 / ATCC 38163 / CBS 112.46 / NRRL 194 / M139) (Aspergillus nidulans), this protein is Alpha-galactosidase D (aglD).